Here is a 265-residue protein sequence, read N- to C-terminus: Tryptophan synthase alpha chain (265 aa).

Catalysis depends on proton acceptor residues glutamate 49 and aspartate 60.

This sequence belongs to the TrpA family. As to quaternary structure, tetramer of two alpha and two beta chains.

It carries out the reaction (1S,2R)-1-C-(indol-3-yl)glycerol 3-phosphate + L-serine = D-glyceraldehyde 3-phosphate + L-tryptophan + H2O. The protein operates within amino-acid biosynthesis; L-tryptophan biosynthesis; L-tryptophan from chorismate: step 5/5. The alpha subunit is responsible for the aldol cleavage of indoleglycerol phosphate to indole and glyceraldehyde 3-phosphate. This Cupriavidus taiwanensis (strain DSM 17343 / BCRC 17206 / CCUG 44338 / CIP 107171 / LMG 19424 / R1) (Ralstonia taiwanensis (strain LMG 19424)) protein is Tryptophan synthase alpha chain.